Consider the following 555-residue polypeptide: Oxamate carbamoyltransferase subunit AllF (555 aa).

The protein belongs to the AllF family. As to quaternary structure, the OXTCase is composed of 3 subunits, AllF, AllG and AllH. Mg(2+) serves as cofactor.

The catalysed reaction is oxamate + carbamoyl phosphate = N-carbamoyl-2-oxoglycine + phosphate. It participates in nitrogen metabolism; (S)-allantoin degradation. Functionally, component of a carbamoyltransferase involved in the anaerobic nitrogen utilization via the assimilation of allantoin. Catalyzes the conversion of oxalurate (N-carbamoyl-2-oxoglycine) to oxamate and carbamoyl phosphate. The protein is Oxamate carbamoyltransferase subunit AllF of Escherichia coli (strain K12).